The chain runs to 112 residues: Mitochondrial import inner membrane translocase subunit TIM14-2 (112 aa).

Residues 7–25 (AGAAVAAAAYAGKYGIEAW) form a helical membrane-spanning segment. Residues 53 to 112 (EAALILGVRESVAAEKVKEAHRRVMVANHPDAGGSHYLASKINEAKDMMLGKTKNSGSAF) enclose the J domain.

It belongs to the TIM14 family. Probable component of the PAM complex at least composed of a mitochondrial HSP70 protein, TIMM44 and TIMM14. The complex interacts with the TIMM23 component of the TIM17:23 complex.

Its subcellular location is the mitochondrion. The protein localises to the mitochondrion inner membrane. In terms of biological role, component of the PAM complex, a complex required for the translocation of transit peptide-containing proteins from the inner membrane into the mitochondrial matrix in an ATP-dependent manner. The polypeptide is Mitochondrial import inner membrane translocase subunit TIM14-2 (TIM14-2) (Arabidopsis thaliana (Mouse-ear cress)).